The primary structure comprises 312 residues: Methionyl-tRNA formyltransferase (312 aa).

Residue 110 to 113 (SLLP) coordinates (6S)-5,6,7,8-tetrahydrofolate.

Belongs to the Fmt family.

It carries out the reaction L-methionyl-tRNA(fMet) + (6R)-10-formyltetrahydrofolate = N-formyl-L-methionyl-tRNA(fMet) + (6S)-5,6,7,8-tetrahydrofolate + H(+). Its function is as follows. Attaches a formyl group to the free amino group of methionyl-tRNA(fMet). The formyl group appears to play a dual role in the initiator identity of N-formylmethionyl-tRNA by promoting its recognition by IF2 and preventing the misappropriation of this tRNA by the elongation apparatus. This Mycobacterium marinum (strain ATCC BAA-535 / M) protein is Methionyl-tRNA formyltransferase.